Here is a 415-residue protein sequence, read N- to C-terminus: Serine--tRNA ligase (415 aa).

L-serine is bound at residue 231 to 233; the sequence is TAE. ATP is bound at residue 262–264; that stretch reads RSE. L-serine is bound at residue Glu-285. 349–352 lines the ATP pocket; it reads EISS. L-serine is bound at residue Ser-383.

This sequence belongs to the class-II aminoacyl-tRNA synthetase family. Type-1 seryl-tRNA synthetase subfamily. As to quaternary structure, homodimer. The tRNA molecule binds across the dimer.

The protein resides in the cytoplasm. The enzyme catalyses tRNA(Ser) + L-serine + ATP = L-seryl-tRNA(Ser) + AMP + diphosphate + H(+). The catalysed reaction is tRNA(Sec) + L-serine + ATP = L-seryl-tRNA(Sec) + AMP + diphosphate + H(+). The protein operates within aminoacyl-tRNA biosynthesis; selenocysteinyl-tRNA(Sec) biosynthesis; L-seryl-tRNA(Sec) from L-serine and tRNA(Sec): step 1/1. Its function is as follows. Catalyzes the attachment of serine to tRNA(Ser). Is also able to aminoacylate tRNA(Sec) with serine, to form the misacylated tRNA L-seryl-tRNA(Sec), which will be further converted into selenocysteinyl-tRNA(Sec). In Helicobacter pylori (strain P12), this protein is Serine--tRNA ligase.